The following is a 1238-amino-acid chain: Multifunctional 2-oxoglutarate metabolism enzyme (1238 aa).

Residues 1-41 (MANISSPFGQNEWLVEEMYRKFRDDPSSVDPSWHEFLVDYN) are 2-oxoglutarate dehydrogenase E1, N-terminal part. Positions 40–108 (YNPESTQEAT…APAPPPAEGD (69 aa)) are disordered. The linker stretch occupies residues 42-94 (PESTQEATEPAVVKPAAAPAKPAPAPAPAKPAAGPPAAGNGSPAAAPSAKPAA). Low complexity-rich tracts occupy residues 51–61 (PAVVKPAAAPA) and 71–98 (KPAA…APAK). Residues 95–343 (APAKAPAPPP…LRTIHQMLLA (249 aa)) form a succinyltransferase E2 region. The Proton acceptor; for succinyltransferase activity role is filled by histidine 322. The 2-oxoglutarate dehydrogenase E1, C-terminal part stretch occupies residues 344-1238 (DEFWDEIFRE…QQEILDTAFG (895 aa)). Residue arginine 549 coordinates thiamine diphosphate. 2 residues coordinate 2-oxoglutarate: histidine 588 and serine 613. 6 residues coordinate thiamine diphosphate: serine 613, leucine 615, aspartate 656, alanine 657, alanine 658, and asparagine 689. Aspartate 656 is a binding site for Mg(2+). Mg(2+) contacts are provided by asparagine 689 and isoleucine 691. Positions 794–824 (DISIKEAEDALRDYQGQLEQVFNEVRELEKH) form a coiled coil. Histidine 1031 is a binding site for 2-oxoglutarate. The acetyl-CoA site is built by threonine 1049, arginine 1065, lysine 1100, serine 1103, glutamine 1153, arginine 1160, and arginine 1161.

It belongs to the 2-oxoacid dehydrogenase family. Kgd subfamily. Homodimer. The 2-oxoglutarate dehydrogenase (ODH) complex contains multiple copies of three enzymatic components: 2-oxoglutarate dehydrogenase (E1), dihydrolipoamide succinyltransferase (E2) and lipoamide dehydrogenase (E3). Requires Mg(2+) as cofactor. Thiamine diphosphate serves as cofactor.

It catalyses the reaction glyoxylate + 2-oxoglutarate + H(+) = 2-hydroxy-3-oxoadipate + CO2. The catalysed reaction is 2-oxoglutarate + H(+) = succinate semialdehyde + CO2. It carries out the reaction N(6)-[(R)-lipoyl]-L-lysyl-[protein] + 2-oxoglutarate + H(+) = N(6)-[(R)-S(8)-succinyldihydrolipoyl]-L-lysyl-[protein] + CO2. The enzyme catalyses N(6)-[(R)-dihydrolipoyl]-L-lysyl-[protein] + succinyl-CoA = N(6)-[(R)-S(8)-succinyldihydrolipoyl]-L-lysyl-[protein] + CoA. The protein operates within carbohydrate metabolism; tricarboxylic acid cycle; succinate from 2-oxoglutarate (transferase route): step 1/2. Its pathway is carbohydrate metabolism; tricarboxylic acid cycle; succinyl-CoA from 2-oxoglutarate (dehydrogenase route): step 1/1. With respect to regulation, alpha-ketoglutarate dehydrogenase and decarboxylase activities are inhibited by unphosphorylated GarA, and allosterically activated by acetyl-CoA, the main substrate of the TCA cycle. In terms of biological role, shows three enzymatic activities that share a first common step, the attack of thiamine-PP on 2-oxoglutarate (alpha-ketoglutarate, KG), leading to the formation of an enamine-thiamine-PP intermediate upon decarboxylation. Thus, displays KGD activity, catalyzing the decarboxylation from five-carbon 2-oxoglutarate to four-carbon succinate semialdehyde (SSA). Also catalyzes C-C bond formation between the activated aldehyde formed after decarboxylation of alpha-ketoglutarate and the carbonyl of glyoxylate (GLX), to yield 2-hydroxy-3-oxoadipate (HOA), which spontaneously decarboxylates to form 5-hydroxylevulinate (HLA). And is also a component of the 2-oxoglutarate dehydrogenase (ODH) complex, that catalyzes the overall conversion of 2-oxoglutarate to succinyl-CoA and CO(2). The KG decarboxylase and KG dehydrogenase reactions provide two alternative, tightly regulated, pathways connecting the oxidative and reductive branches of the TCA cycle. In Mycobacterium ulcerans (strain Agy99), this protein is Multifunctional 2-oxoglutarate metabolism enzyme (kgd).